Consider the following 196-residue polypeptide: Carnitine operon protein CaiE (196 aa).

The segment at 173–196 (TQPLRQMEENRPRLQGTTDVTPKR) is disordered. Residues 187–196 (QGTTDVTPKR) are compositionally biased toward polar residues.

This sequence belongs to the transferase hexapeptide repeat family.

It functions in the pathway amine and polyamine metabolism; carnitine metabolism. Overproduction of CaiE stimulates the activity of CaiB and CaiD. The polypeptide is Carnitine operon protein CaiE (Escherichia coli O6:K15:H31 (strain 536 / UPEC)).